The following is a 417-amino-acid chain: Gamma-glutamyl phosphate reductase (417 aa).

Belongs to the gamma-glutamyl phosphate reductase family.

It is found in the cytoplasm. It carries out the reaction L-glutamate 5-semialdehyde + phosphate + NADP(+) = L-glutamyl 5-phosphate + NADPH + H(+). The protein operates within amino-acid biosynthesis; L-proline biosynthesis; L-glutamate 5-semialdehyde from L-glutamate: step 2/2. Functionally, catalyzes the NADPH-dependent reduction of L-glutamate 5-phosphate into L-glutamate 5-semialdehyde and phosphate. The product spontaneously undergoes cyclization to form 1-pyrroline-5-carboxylate. The sequence is that of Gamma-glutamyl phosphate reductase from Sodalis glossinidius (strain morsitans).